The primary structure comprises 201 residues: UPF0301 protein Mvan_6057 (201 aa).

Belongs to the UPF0301 (AlgH) family.

This Mycolicibacterium vanbaalenii (strain DSM 7251 / JCM 13017 / BCRC 16820 / KCTC 9966 / NRRL B-24157 / PYR-1) (Mycobacterium vanbaalenii) protein is UPF0301 protein Mvan_6057.